A 680-amino-acid chain; its full sequence is GTPase Obg (680 aa).

The 159-residue stretch at 2-160 folds into the Obg domain; sequence DQFIDVVSFE…LNIRLEVKLI (159 aa). The 176-residue stretch at 161–336 folds into the OBG-type G domain; the sequence is ADIGLVGMPN…LDGDMLDKVT (176 aa). GTP contacts are provided by residues 167 to 174, 192 to 196, 214 to 217, 281 to 284, and 317 to 319; these read GMPNTGKS, FTTLT, DIPG, NKTD, and PEI. Residues serine 174 and threonine 194 each coordinate Mg(2+). Positions 371 to 680 are radical SAM domain; the sequence is TKRVFGPVVS…NGVLSYAVNI (310 aa). The Radical SAM core domain occupies 383 to 613; it reads LGNSLGIDVI…IEIDVPSVSD (231 aa). Positions 397, 401, and 404 each coordinate [4Fe-4S] cluster.

Belongs to the TRAFAC class OBG-HflX-like GTPase superfamily. OBG GTPase family. As to quaternary structure, monomer. The cofactor is Mg(2+). [4Fe-4S] cluster serves as cofactor.

It localises to the cytoplasm. Its function is as follows. An essential GTPase which binds GTP, GDP and possibly (p)ppGpp with moderate affinity, with high nucleotide exchange rates and a fairly low GTP hydrolysis rate. Plays a role in control of the cell cycle, stress response, ribosome biogenesis and in those bacteria that undergo differentiation, in morphogenesis control. This is GTPase Obg from Brachyspira hyodysenteriae (strain ATCC 49526 / WA1).